A 453-amino-acid polypeptide reads, in one-letter code: Probable acetylornithine aminotransferase, mitochondrial (453 aa).

Lys302 carries the N6-(pyridoxal phosphate)lysine modification.

Belongs to the class-III pyridoxal-phosphate-dependent aminotransferase family. Requires pyridoxal 5'-phosphate as cofactor.

The protein localises to the mitochondrion matrix. It carries out the reaction N(2)-acetyl-L-ornithine + 2-oxoglutarate = N-acetyl-L-glutamate 5-semialdehyde + L-glutamate. It participates in amino-acid biosynthesis; L-arginine biosynthesis; N(2)-acetyl-L-ornithine from L-glutamate: step 4/4. This chain is Probable acetylornithine aminotransferase, mitochondrial (argD), found in Dictyostelium discoideum (Social amoeba).